The following is a 930-amino-acid chain: MDYSKTLNLPRTDFPMRANLPQREPEILKFWEENDIYGKVQEANRGKPKFILHDGPPYANGHLHLGHTLNKILKDIIIKYHSMNGYDAPYVPGWDTHGLPIEQQAIKNLGLNRHAVDVVEFRNRCRDYALKYVNIQREEFKRLGVRGDWEHPYLTLEPEYEAIQIGIFGEMAKKGYIYKGLKPVYWCTDCETALAEAEVEYGEERSPSIYVKFPVADARGLFEPRGSSIVIWTTTPWTLPANVAIALHPEFKYVLIQVGEERLLMAAELVRPVLELLGVKDYQVVATFTGSELEGVVCRNPLMDRDSVVILGEHVTLEQGTGCVHTAPGHGLEDYEVGMRYHLPVLSPLDDRGRFTEEGGQFAGLFIDEANKAVVKELEARGALLHFGFIKHQYPHCWRCKHPIIFRATEQWFASIEGFRQEALEAIKKVKWIPSWGEDRIYNMVADRSDWCISRQRTWGVPIPIFYCANCGREIINDATISHLQELFRKHGSNVWFAREAGELVPPGLKCPECGSKEFRKETDIMDVWFDSGSSHAAVLATRPELAWPADLYLEGSDQHRGWFNSSLSTAVATRGRAPYRQVLTHGFLVDEEGRKMSKSLGNGIDPADVIRQRGADVLRLWVASADYRRDVAASENIMRQITEAYRKIRNTCRFLLANLADFDPGKDQVPREEMLELDRWAMNRLQRLIARVTMAYDDYEFHVVYHTIHNFCAVDLSAVYLDIIKDRLYTWPAASKGRRSAQTVLYETINVLVRLLTPILAFTTEEIWRYLPGEDDRPISVQLAGWPQVKTEFLDDELEEKWKRILQVRDVVARALERARQEQDLGNSLNAAVHLYPDADMYQFLKPLGDELATIMIVSRVDLHQPGEEAPAGSLEAPELPGLRVYVTGAPGQKCERCWMVSETVGQDTDHPTLCRRCATVVKEMYMNG.

The 'HIGH' region motif lies at 57–67 (PYANGHLHLGH). Position 555 (Glu-555) interacts with L-isoleucyl-5'-AMP. A 'KMSKS' region motif is present at residues 596–600 (KMSKS). Residue Lys-599 participates in ATP binding. Positions 896, 899, 916, and 919 each coordinate Zn(2+).

It belongs to the class-I aminoacyl-tRNA synthetase family. IleS type 1 subfamily. Monomer. Zn(2+) serves as cofactor.

Its subcellular location is the cytoplasm. It carries out the reaction tRNA(Ile) + L-isoleucine + ATP = L-isoleucyl-tRNA(Ile) + AMP + diphosphate. Its function is as follows. Catalyzes the attachment of isoleucine to tRNA(Ile). As IleRS can inadvertently accommodate and process structurally similar amino acids such as valine, to avoid such errors it has two additional distinct tRNA(Ile)-dependent editing activities. One activity is designated as 'pretransfer' editing and involves the hydrolysis of activated Val-AMP. The other activity is designated 'posttransfer' editing and involves deacylation of mischarged Val-tRNA(Ile). This Moorella thermoacetica (strain ATCC 39073 / JCM 9320) protein is Isoleucine--tRNA ligase.